The primary structure comprises 572 residues: MLTSQYLLSTSKDIPYDAKIISHQLMIRSGMIRKTSSGLYVWLPTGMRVLKKIKNIITTEMEKINALEILMPIIQPEYLWKESRRLNLYGEELLRFLDRRKNQFILGPTNEEVVTNFIGSEIHSYKQLPLTVYQIQTKFRDEIRPRFGIIRTREFTMKDAYSFHINQSCLENTYNKFYDSYINIFKKMNLNFCAVKADSGSMGGNISHEFQAFSQNGEDEIVFSNDKLYSSNMNMAESIETIDFFKKKYSSCLIKNKTNTKKSIIMSEKLNTPLINQIQTFLIQTKINDITSIAALLIRGDHELNFFKVEKIDIINKPLVFLNEKEVISLIGVKKEFLGPLGLKVPIIADISTFNMKNFTIGSNINKHFFINVNWNIDLPMPIFKDIRKVTKNDLSPNGSGYLNIKQSIEIGHIFQLGQKYSRKIQQSVKIKNGNLKNLYMGCYGIGITRIAAAVIEQHHDKNGIIWPDSIAPFEVVILPINMKKDNKIKIIAHFLYKKFKKTGIDVILDDRDERPGVMFNEVDLIGIPHQIIISKRSINYDNVEYRERKNKENILINIKDIKNFIIQKLKK.

This sequence belongs to the class-II aminoacyl-tRNA synthetase family. ProS type 1 subfamily. Homodimer.

The protein resides in the cytoplasm. The catalysed reaction is tRNA(Pro) + L-proline + ATP = L-prolyl-tRNA(Pro) + AMP + diphosphate. Catalyzes the attachment of proline to tRNA(Pro) in a two-step reaction: proline is first activated by ATP to form Pro-AMP and then transferred to the acceptor end of tRNA(Pro). As ProRS can inadvertently accommodate and process non-cognate amino acids such as alanine and cysteine, to avoid such errors it has two additional distinct editing activities against alanine. One activity is designated as 'pretransfer' editing and involves the tRNA(Pro)-independent hydrolysis of activated Ala-AMP. The other activity is designated 'posttransfer' editing and involves deacylation of mischarged Ala-tRNA(Pro). The misacylated Cys-tRNA(Pro) is not edited by ProRS. In Buchnera aphidicola subsp. Acyrthosiphon pisum (strain APS) (Acyrthosiphon pisum symbiotic bacterium), this protein is Proline--tRNA ligase.